The primary structure comprises 303 residues: Probable serine/threonine-protein kinase FPV212 (303 aa).

One can recognise a Protein kinase domain in the interval 25-303 (WILGKQLGSG…NYESLKQMFL (279 aa)). Residues 31 to 39 (LGSGGFGLV) and K54 each bind ATP. D160 functions as the Proton acceptor in the catalytic mechanism.

Belongs to the protein kinase superfamily. Ser/Thr protein kinase family. Poxviruses subfamily.

It carries out the reaction L-seryl-[protein] + ATP = O-phospho-L-seryl-[protein] + ADP + H(+). The enzyme catalyses L-threonyl-[protein] + ATP = O-phospho-L-threonyl-[protein] + ADP + H(+). The chain is Probable serine/threonine-protein kinase FPV212 from Vertebrata (FPV).